Here is a 509-residue protein sequence, read N- to C-terminus: Cytochrome P450 monooxygenase ORF9 (509 aa).

A run of 2 helical transmembrane segments spans residues I20 to V40 and L309 to L329. N353 carries an N-linked (GlcNAc...) asparagine glycan. Residue C448 participates in heme binding.

The protein belongs to the cytochrome P450 family. Heme serves as cofactor.

Its subcellular location is the membrane. It functions in the pathway sesquiterpene biosynthesis. Its function is as follows. Cytochrome P450 monooxygenase; part of the gene cluster that mediates the biosynthesis of PR-toxin, a bicyclic sesquiterpene belonging to the eremophilane class and acting as a mycotoxin. The first step of the pathway is catalyzed by the aristolochene synthase which performs the cyclization of trans,trans-farnesyl diphosphate (FPP) to the bicyclic sesquiterpene aristolochene. Following the formation of aristolochene, the non-oxygenated aristolochene is converted to the trioxygenated intermediate eremofortin B, via 7-epi-neopetasone. This conversion appears to involve three enzymes, a hydroxysterol oxidase-like enzyme, the quinone-oxidase prx3 that forms the quinone-type-structure in the bicyclic nucleus of aristolochene with the C8-oxo group and the C-3 hydroxyl group, and the P450 monooxygenase ORF6 that introduces the epoxide at the double bond between carbons 1 and 2. No monoxy or dioxy-intermediates have been reported to be released to the broth, so these three early oxidative reactions may be coupled together. Eremofortin B is further oxidized by another P450 monooxygenase, that introduces a second epoxide between carbons 7 and 11 prior to acetylation to eremofortin A by the acetyltransferase ORF8. The second epoxidation may be performed by a second P450 monooxygenase. After the acetylation step, eremofortin A is converted to eremofortin C and then to PR-toxin. First the conversion of eremofortin A to eremofortin C proceeds by oxidation of the side chain of the molecule at C-12 and is catalyzed by the short-chain oxidoreductase prx1. The cytochrome P450 monooxygenase ORF6 is probably also involved in this step. The primary alcohol formed at C-12 is finally oxidized by the short-chain alcohol dehydrogenase prx4 that forms PR-toxin. The sequence is that of Cytochrome P450 monooxygenase ORF9 from Penicillium roqueforti (strain FM164).